The chain runs to 462 residues: General transcription factor IIH subunit 4 (462 aa).

Belongs to the TFB2 family. Component of the 7-subunit TFIIH core complex composed of XPB/ERCC3, XPD/ERCC2, GTF2H1, GTF2H2, GTF2H3, GTF2H4 and GTF2H5, which is active in NER. The core complex associates with the 3-subunit CDK-activating kinase (CAK) module composed of CCNH/cyclin H, CDK7 and MNAT1 to form the 10-subunit holoenzyme (holo-TFIIH) active in transcription. Part of TBP-based Pol II pre-initiation complex (PIC), in which Pol II core assembles with general transcription factors and other specific initiation factors including GTF2E1, GTF2E2, GTF2F1, GTF2F2, TCEA1, ERCC2, ERCC3, GTF2H2, GTF2H3, GTF2H4, GTF2H5, GTF2A1, GTF2A2, GTF2B and TBP; this large multi-subunit PIC complex mediates DNA unwinding and targets Pol II core to the transcription start site where the first phosphodiester bond forms.

It is found in the nucleus. Component of the general transcription and DNA repair factor IIH (TFIIH) core complex, which is involved in general and transcription-coupled nucleotide excision repair (NER) of damaged DNA and, when complexed to CAK, in RNA transcription by RNA polymerase II. In NER, TFIIH acts by opening DNA around the lesion to allow the excision of the damaged oligonucleotide and its replacement by a new DNA fragment. In transcription, TFIIH has an essential role in transcription initiation. When the pre-initiation complex (PIC) has been established, TFIIH is required for promoter opening and promoter escape. Phosphorylation of the C-terminal tail (CTD) of the largest subunit of RNA polymerase II by the kinase module CAK controls the initiation of transcription. Its function is as follows. Stimulates the ATPase activity of TFIIH subunit XPB/ERCC3. The chain is General transcription factor IIH subunit 4 (GTF2H4) from Homo sapiens (Human).